The sequence spans 226 residues: PKHD-type hydroxylase Sde_2812 (226 aa).

The Fe2OG dioxygenase domain maps to 78–178 (KIFPPLFNCY…RLASFFWLQS (101 aa)). Positions 96, 98, and 159 each coordinate Fe cation. Position 169 (R169) interacts with 2-oxoglutarate.

Requires Fe(2+) as cofactor. L-ascorbate is required as a cofactor.

The polypeptide is PKHD-type hydroxylase Sde_2812 (Saccharophagus degradans (strain 2-40 / ATCC 43961 / DSM 17024)).